The primary structure comprises 447 residues: NADP-specific glutamate dehydrogenase (447 aa).

Lysine 92, glutamine 113, and lysine 116 together coordinate substrate. The Proton donor role is filled by lysine 128. Residue glycine 167 participates in substrate binding. Residues threonine 211 and asparagine 242 each coordinate NADP(+). Serine 380 contributes to the substrate binding site.

It belongs to the Glu/Leu/Phe/Val dehydrogenases family. Homohexamer.

The catalysed reaction is L-glutamate + NADP(+) + H2O = 2-oxoglutarate + NH4(+) + NADPH + H(+). Functionally, catalyzes the reversible oxidative deamination of glutamate to alpha-ketoglutarate and ammonia. The sequence is that of NADP-specific glutamate dehydrogenase (gdhA) from Salmonella typhi.